Reading from the N-terminus, the 414-residue chain is Probable cell wall biosynthesis protein LcpB (414 aa).

The interval 1–108 is disordered; it reads MDSPGQGEIA…PPVIAGDGGR (108 aa). The Cytoplasmic portion of the chain corresponds to 1-120; the sequence is MDSPGQGEIA…KAISFKPRGC (120 aa). Positions 9-23 are enriched in basic and acidic residues; it reads IARDSQGRPILDRYG. The span at 33–42 shows a compositional bias: pro residues; it reads RQTPPTPRTP. Low complexity predominate over residues 43–53; the sequence is PVNETRVYQPR. Pro residues predominate over residues 54–80; sequence QTPPRQTPPRQTPPRQMPPRQTPPRQV. Residues 121–141 form a helical membrane-spanning segment; sequence LGTIAGVLAVGLVLVFVVTLW. The Periplasmic segment spans residues 142-414; it reads ADSKLNRVDA…GAEALFSSMR (273 aa).

Belongs to the LytR/CpsA/Psr (LCP) family.

The protein localises to the cell inner membrane. The chain is Probable cell wall biosynthesis protein LcpB from Corynebacterium glutamicum (strain ATCC 13032 / DSM 20300 / JCM 1318 / BCRC 11384 / CCUG 27702 / LMG 3730 / NBRC 12168 / NCIMB 10025 / NRRL B-2784 / 534).